The sequence spans 679 residues: Glycine--tRNA ligase beta subunit (679 aa).

This sequence belongs to the class-II aminoacyl-tRNA synthetase family. Tetramer of two alpha and two beta subunits.

Its subcellular location is the cytoplasm. It catalyses the reaction tRNA(Gly) + glycine + ATP = glycyl-tRNA(Gly) + AMP + diphosphate. The protein is Glycine--tRNA ligase beta subunit of Streptococcus pyogenes serotype M28 (strain MGAS6180).